The chain runs to 322 residues: Glycerol-3-phosphate dehydrogenase [NAD(P)+] (322 aa).

Residues Trp13, His33, and Lys99 each contribute to the NADPH site. Sn-glycerol 3-phosphate is bound by residues Lys99, Gly127, and Ser129. Ala131 provides a ligand contact to NADPH. The sn-glycerol 3-phosphate site is built by Lys182, Asp235, Ser245, Arg246, and Asn247. Catalysis depends on Lys182, which acts as the Proton acceptor. An NADPH-binding site is contributed by Arg246. Glu272 serves as a coordination point for NADPH.

The protein belongs to the NAD-dependent glycerol-3-phosphate dehydrogenase family.

The protein resides in the cytoplasm. The catalysed reaction is sn-glycerol 3-phosphate + NAD(+) = dihydroxyacetone phosphate + NADH + H(+). It catalyses the reaction sn-glycerol 3-phosphate + NADP(+) = dihydroxyacetone phosphate + NADPH + H(+). The protein operates within membrane lipid metabolism; glycerophospholipid metabolism. Its function is as follows. Catalyzes the reduction of the glycolytic intermediate dihydroxyacetone phosphate (DHAP) to sn-glycerol 3-phosphate (G3P), the key precursor for phospholipid synthesis. In Ruthia magnifica subsp. Calyptogena magnifica, this protein is Glycerol-3-phosphate dehydrogenase [NAD(P)+].